The sequence spans 612 residues: Adherence factor (612 aa).

Composition is skewed to low complexity over residues 1–18 (MSSF…NLSS), 47–68 (SSMM…QQQQ), 94–106 (LQTQ…SATT), 115–141 (YNQQ…NNMQ), 182–203 (QSAQ…QPRS), and 218–228 (SRQVSGSGRST). 7 disordered regions span residues 1-20 (MSSF…SSFQ), 46-68 (ASSM…QQQQ), 94-143 (LQTQ…MQFF), 179-273 (PQLQ…NNNK), 443-480 (KEKK…NTNN), 497-527 (SQLM…LSNN), and 546-612 (SQEQ…KQFY). A compositionally biased stretch (polar residues) spans 230-240 (AKKQSAITSGS). The segment covering 254–272 (TSVANSTSTTTMTTTNNNN) has biased composition (low complexity). Residues 443 to 457 (KEKKLTEKTIEQREQ) are compositionally biased toward basic and acidic residues. 2 stretches are compositionally biased toward polar residues: residues 465–480 (ANHS…NTNN) and 497–512 (SQLM…ATKI). Basic residues predominate over residues 555–571 (NQHHHNHQQHPLIHHHQ). A compositionally biased stretch (low complexity) spans 585–606 (PSTIPTSSLSIQQQQQQQQQQL).

In terms of biological role, surface antigen mediating adhesion and aggregation in S.cerevisiae. This is Adherence factor (ADF1) from Candida albicans (strain SC5314 / ATCC MYA-2876) (Yeast).